The primary structure comprises 156 residues: Small ribosomal subunit protein uS7c (156 aa).

This sequence belongs to the universal ribosomal protein uS7 family. In terms of assembly, part of the 30S ribosomal subunit.

It is found in the plastid. Its subcellular location is the chloroplast. One of the primary rRNA binding proteins, it binds directly to 16S rRNA where it nucleates assembly of the head domain of the 30S subunit. This is Small ribosomal subunit protein uS7c (rps7) from Porphyra purpurea (Red seaweed).